A 290-amino-acid polypeptide reads, in one-letter code: Lipoyl synthase 2 (290 aa).

[4Fe-4S] cluster-binding residues include C37, C42, C48, C63, C67, C70, and S283. Residues 49–272 (YGQKTATFLL…GNIARELGFS (224 aa)) form the Radical SAM core domain.

It belongs to the radical SAM superfamily. Lipoyl synthase family. The cofactor is [4Fe-4S] cluster.

The protein localises to the cytoplasm. It catalyses the reaction [[Fe-S] cluster scaffold protein carrying a second [4Fe-4S](2+) cluster] + N(6)-octanoyl-L-lysyl-[protein] + 2 oxidized [2Fe-2S]-[ferredoxin] + 2 S-adenosyl-L-methionine + 4 H(+) = [[Fe-S] cluster scaffold protein] + N(6)-[(R)-dihydrolipoyl]-L-lysyl-[protein] + 4 Fe(3+) + 2 hydrogen sulfide + 2 5'-deoxyadenosine + 2 L-methionine + 2 reduced [2Fe-2S]-[ferredoxin]. It functions in the pathway protein modification; protein lipoylation via endogenous pathway; protein N(6)-(lipoyl)lysine from octanoyl-[acyl-carrier-protein]: step 2/2. Its function is as follows. Catalyzes the radical-mediated insertion of two sulfur atoms into the C-6 and C-8 positions of the octanoyl moiety bound to the lipoyl domains of lipoate-dependent enzymes, thereby converting the octanoylated domains into lipoylated derivatives. The protein is Lipoyl synthase 2 of Thermosynechococcus vestitus (strain NIES-2133 / IAM M-273 / BP-1).